We begin with the raw amino-acid sequence, 231 residues long: Small ribosomal subunit protein uS3 (231 aa).

Residues 18-97 (VDEYLAKQFY…NPELNARVMA (80 aa)) form the KH type-2 domain.

The protein belongs to the universal ribosomal protein uS3 family. In terms of assembly, part of the 30S ribosomal subunit.

Binds the lower part of the 30S subunit head. The polypeptide is Small ribosomal subunit protein uS3 (Sulfolobus acidocaldarius (strain ATCC 33909 / DSM 639 / JCM 8929 / NBRC 15157 / NCIMB 11770)).